The chain runs to 206 residues: Outer-membrane lipoprotein carrier protein (206 aa).

An N-terminal signal peptide occupies residues 1 to 21; that stretch reads MKKLLCAVLLSPLLYSNAVLA.

The protein belongs to the LolA family. In terms of assembly, monomer.

It localises to the periplasm. Functionally, participates in the translocation of lipoproteins from the inner membrane to the outer membrane. Only forms a complex with a lipoprotein if the residue after the N-terminal Cys is not an aspartate (The Asp acts as a targeting signal to indicate that the lipoprotein should stay in the inner membrane). The protein is Outer-membrane lipoprotein carrier protein of Shewanella sp. (strain ANA-3).